The chain runs to 295 residues: Protease HtpX (295 aa).

2 consecutive transmembrane segments (helical) span residues Ile-4–Leu-24 and Gln-42–Ser-62. Zn(2+) is bound at residue His-147. Glu-148 is an active-site residue. His-151 serves as a coordination point for Zn(2+). A run of 2 helical transmembrane segments spans residues Val-158–Ile-178 and Ile-199–Phe-219. Glu-224 provides a ligand contact to Zn(2+).

Belongs to the peptidase M48B family. Requires Zn(2+) as cofactor.

It is found in the cell inner membrane. The protein is Protease HtpX of Pseudomonas syringae pv. tomato (strain ATCC BAA-871 / DC3000).